A 1435-amino-acid polypeptide reads, in one-letter code: Gag-Pol polyprotein (1435 aa).

Glycine 2 is lipidated: N-myristoyl glycine; by host. The interval 7-31 is interaction with Gp41; it reads VLSAGELDKWEKIRLRPGGKKQYRL. The tract at residues 8 to 43 is interaction with host CALM1; it reads LSAGELDKWEKIRLRPGGKKQYRLKHIVWASRELER. The interval 12 to 19 is interaction with host AP3D1; the sequence is ELDKWEKI. Residues 14–33 form an interaction with membrane phosphatidylinositol 4,5-bisphosphate and RNA region; that stretch reads DKWEKIRLRPGGKKQYRLKH. The Nuclear export signal signature appears at 16-22; that stretch reads WEKIRLR. The short motif at 26–32 is the Nuclear localization signal element; that stretch reads KKQYRLK. The tract at residues 73–77 is interaction with membrane phosphatidylinositol 4,5-bisphosphate; it reads EELRS. A disordered region spans residues 106 to 128; it reads EEQNKSKKKAQQAAADTGNSSQV. Phosphotyrosine; by host is present on tyrosine 132. Positions 189–227 are interaction with human PPIA/CYPA and NUP153; that stretch reads NTVGGHQAAMQMLKETINEEAAEWDRLHPVHAGPIAPGQ. The interval 277-363 is dimerization/Multimerization of capsid protein p24; it reads YSPTSILDIR…GGPGHKARVL (87 aa). CCHC-type zinc fingers lie at residues 390–407 and 411–428; these read VKCF…NCRA and KGCW…DCTE. The tract at residues 489–493 is dimerization of protease; sequence PQITL. The region spanning 508–577 is the Peptidase A2 domain; sequence KEALLDTGAD…TPVNIIGRNL (70 aa). The For protease activity; shared with dimeric partner role is filled by aspartate 513. Dimerization of protease stretches follow at residues 537–543 and 576–588; these read GIGGFIK and NLLT…LNFP. The 191-residue stretch at 631-821 folds into the Reverse transcriptase domain; sequence EGKISKIGPE…PPFLWMGYEL (191 aa). Mg(2+) is bound by residues aspartate 697, aspartate 772, and aspartate 773. The tract at residues 814 to 822 is RT 'primer grip'; sequence FLWMGYELH. The Tryptophan repeat motif motif lies at 985-1001; that stretch reads WETWWTEYWQATWIPEW. Residues 1021–1144 enclose the RNase H type-1 domain; that stretch reads IIGAETFYVD…VDKLVSAGIR (124 aa). Residues aspartate 1030, glutamate 1065, aspartate 1085, and aspartate 1136 each coordinate Mg(2+). The segment at 1150–1191 adopts an Integrase-type zinc-finger fold; that stretch reads DGIDKAQEEHEKYHSNWRAMASDFNLPPVVAKEIVASCDKCQ. Histidine 1159, histidine 1163, cysteine 1187, and cysteine 1190 together coordinate Zn(2+). In terms of domain architecture, Integrase catalytic spans 1201–1351; that stretch reads VDCSPGIWQL…SAGERIVDII (151 aa). 3 residues coordinate Mg(2+): aspartate 1211, aspartate 1263, and glutamate 1299. The integrase-type DNA-binding region spans 1370-1417; the sequence is FRVYYRDSRDPLWKGPAKLLWKGEGAVVIQDNSDIKVVPRRKAKIIRD.

As to quaternary structure, homotrimer; further assembles as hexamers of trimers. Interacts with gp41 (via C-terminus). Interacts with host CALM1; this interaction induces a conformational change in the Matrix protein, triggering exposure of the myristate group. Interacts with host AP3D1; this interaction allows the polyprotein trafficking to multivesicular bodies during virus assembly. Part of the pre-integration complex (PIC) which is composed of viral genome, matrix protein, Vpr and integrase. In terms of assembly, homodimer; the homodimer further multimerizes as homohexamers or homopentamers. Interacts with human PPIA/CYPA; This interaction stabilizes the capsid. Interacts with human NUP153. Interacts with host PDZD8; this interaction stabilizes the capsid. Interacts with monkey TRIM5; this interaction destabilizes the capsid. Homodimer, whose active site consists of two apposed aspartic acid residues. As to quaternary structure, heterodimer of p66 RT and p51 RT (RT p66/p51). Heterodimerization of RT is essential for DNA polymerase activity. The overall folding of the subdomains is similar in p66 RT and p51 RT but the spatial arrangements of the subdomains are dramatically different. In terms of assembly, homotetramer; may further associate as a homohexadecamer. Part of the pre-integration complex (PIC) which is composed of viral genome, matrix protein, Vpr and integrase. Interacts with human SMARCB1/INI1 and human PSIP1/LEDGF isoform 1. Interacts with human KPNA3; this interaction might play a role in nuclear import of the pre-integration complex. Interacts with human NUP153; this interaction might play a role in nuclear import of the pre-integration complex. Requires Mg(2+) as cofactor. Specific enzymatic cleavages by the viral protease yield mature proteins. The protease is released by autocatalytic cleavage. The polyprotein is cleaved during and after budding, this process is termed maturation. Proteolytic cleavage of p66 RT removes the RNase H domain to yield the p51 RT subunit. Nucleocapsid protein p7 might be further cleaved after virus entry. Post-translationally, tyrosine phosphorylated presumably in the virion by a host kinase. Phosphorylation is apparently not a major regulator of membrane association. In terms of processing, phosphorylated possibly by host MAPK1; this phosphorylation is necessary for Pin1-mediated virion uncoating. Methylated by host PRMT6, impairing its function by reducing RNA annealing and the initiation of reverse transcription.

It localises to the host cell membrane. It is found in the host endosome. The protein resides in the host multivesicular body. Its subcellular location is the virion membrane. The protein localises to the host nucleus. It localises to the host cytoplasm. It is found in the virion. The catalysed reaction is Specific for a P1 residue that is hydrophobic, and P1' variable, but often Pro.. The enzyme catalyses Endohydrolysis of RNA in RNA/DNA hybrids. Three different cleavage modes: 1. sequence-specific internal cleavage of RNA. Human immunodeficiency virus type 1 and Moloney murine leukemia virus enzymes prefer to cleave the RNA strand one nucleotide away from the RNA-DNA junction. 2. RNA 5'-end directed cleavage 13-19 nucleotides from the RNA end. 3. DNA 3'-end directed cleavage 15-20 nucleotides away from the primer terminus.. It catalyses the reaction 3'-end directed exonucleolytic cleavage of viral RNA-DNA hybrid.. It carries out the reaction DNA(n) + a 2'-deoxyribonucleoside 5'-triphosphate = DNA(n+1) + diphosphate. Protease: The viral protease is inhibited by many synthetic protease inhibitors (PIs), such as amprenavir, atazanavir, indinavir, loprinavir, nelfinavir, ritonavir and saquinavir. Use of protease inhibitors in tritherapy regimens permit more ambitious therapeutic strategies. Reverse transcriptase/ribonuclease H: RT can be inhibited either by nucleoside RT inhibitors (NRTIs) or by non nucleoside RT inhibitors (NNRTIs). NRTIs act as chain terminators, whereas NNRTIs inhibit DNA polymerization by binding a small hydrophobic pocket near the RT active site and inducing an allosteric change in this region. Classical NRTIs are abacavir, adefovir (PMEA), didanosine (ddI), lamivudine (3TC), stavudine (d4T), tenofovir (PMPA), zalcitabine (ddC), and zidovudine (AZT). Classical NNRTIs are atevirdine (BHAP U-87201E), delavirdine, efavirenz (DMP-266), emivirine (I-EBU), and nevirapine (BI-RG-587). The tritherapies used as a basic effective treatment of AIDS associate two NRTIs and one NNRTI. Functionally, mediates, with Gag polyprotein, the essential events in virion assembly, including binding the plasma membrane, making the protein-protein interactions necessary to create spherical particles, recruiting the viral Env proteins, and packaging the genomic RNA via direct interactions with the RNA packaging sequence (Psi). Gag-Pol polyprotein may regulate its own translation, by the binding genomic RNA in the 5'-UTR. At low concentration, the polyprotein would promote translation, whereas at high concentration, the polyprotein would encapsidate genomic RNA and then shut off translation. In terms of biological role, targets the polyprotein to the plasma membrane via a multipartite membrane-binding signal, that includes its myristoylated N-terminus. Matrix protein is part of the pre-integration complex. Implicated in the release from host cell mediated by Vpu. Binds to RNA. Forms the conical core that encapsulates the genomic RNA-nucleocapsid complex in the virion. Most core are conical, with only 7% tubular. The core is constituted by capsid protein hexamer subunits. The core is disassembled soon after virion entry. Host restriction factors such as TRIM5-alpha or TRIMCyp bind retroviral capsids and cause premature capsid disassembly, leading to blocks in reverse transcription. Capsid restriction by TRIM5 is one of the factors which restricts HIV-1 to the human species. Host PIN1 apparently facilitates the virion uncoating. On the other hand, interactions with PDZD8 or CYPA stabilize the capsid. Its function is as follows. Encapsulates and protects viral dimeric unspliced genomic RNA (gRNA). Binds these RNAs through its zinc fingers. Acts as a nucleic acid chaperone which is involved in rearangement of nucleic acid secondary structure during gRNA retrotranscription. Also facilitates template switch leading to recombination. As part of the polyprotein, participates in gRNA dimerization, packaging, tRNA incorporation and virion assembly. Functionally, aspartyl protease that mediates proteolytic cleavages of Gag and Gag-Pol polyproteins during or shortly after the release of the virion from the plasma membrane. Cleavages take place as an ordered, step-wise cascade to yield mature proteins. This process is called maturation. Displays maximal activity during the budding process just prior to particle release from the cell. Also cleaves Nef and Vif, probably concomitantly with viral structural proteins on maturation of virus particles. Hydrolyzes host EIF4GI and PABP1 in order to shut off the capped cellular mRNA translation. The resulting inhibition of cellular protein synthesis serves to ensure maximal viral gene expression and to evade host immune response. Also mediates cleavage of host YTHDF3. Mediates cleavage of host CARD8, thereby activating the CARD8 inflammasome, leading to the clearance of latent HIV-1 in patient CD4(+) T-cells after viral reactivation; in contrast, HIV-1 can evade CARD8-sensing when its protease remains inactive in infected cells prior to viral budding. In terms of biological role, multifunctional enzyme that converts the viral RNA genome into dsDNA in the cytoplasm, shortly after virus entry into the cell. This enzyme displays a DNA polymerase activity that can copy either DNA or RNA templates, and a ribonuclease H (RNase H) activity that cleaves the RNA strand of RNA-DNA heteroduplexes in a partially processive 3' to 5' endonucleasic mode. Conversion of viral genomic RNA into dsDNA requires many steps. A tRNA(3)-Lys binds to the primer-binding site (PBS) situated at the 5'-end of the viral RNA. RT uses the 3' end of the tRNA primer to perform a short round of RNA-dependent minus-strand DNA synthesis. The reading proceeds through the U5 region and ends after the repeated (R) region which is present at both ends of viral RNA. The portion of the RNA-DNA heteroduplex is digested by the RNase H, resulting in a ssDNA product attached to the tRNA primer. This ssDNA/tRNA hybridizes with the identical R region situated at the 3' end of viral RNA. This template exchange, known as minus-strand DNA strong stop transfer, can be either intra- or intermolecular. RT uses the 3' end of this newly synthesized short ssDNA to perform the RNA-dependent minus-strand DNA synthesis of the whole template. RNase H digests the RNA template except for two polypurine tracts (PPTs) situated at the 5'-end and near the center of the genome. It is not clear if both polymerase and RNase H activities are simultaneous. RNase H probably can proceed both in a polymerase-dependent (RNA cut into small fragments by the same RT performing DNA synthesis) and a polymerase-independent mode (cleavage of remaining RNA fragments by free RTs). Secondly, RT performs DNA-directed plus-strand DNA synthesis using the PPTs that have not been removed by RNase H as primers. PPTs and tRNA primers are then removed by RNase H. The 3' and 5' ssDNA PBS regions hybridize to form a circular dsDNA intermediate. Strand displacement synthesis by RT to the PBS and PPT ends produces a blunt ended, linear dsDNA copy of the viral genome that includes long terminal repeats (LTRs) at both ends. Catalyzes viral DNA integration into the host chromosome, by performing a series of DNA cutting and joining reactions. This enzyme activity takes place after virion entry into a cell and reverse transcription of the RNA genome in dsDNA. The first step in the integration process is 3' processing. This step requires a complex comprising the viral genome, matrix protein, Vpr and integrase. This complex is called the pre-integration complex (PIC). The integrase protein removes 2 nucleotides from each 3' end of the viral DNA, leaving recessed CA OH's at the 3' ends. In the second step, the PIC enters cell nucleus. This process is mediated through integrase and Vpr proteins, and allows the virus to infect a non dividing cell. This ability to enter the nucleus is specific of lentiviruses, other retroviruses cannot and rely on cell division to access cell chromosomes. In the third step, termed strand transfer, the integrase protein joins the previously processed 3' ends to the 5' ends of strands of target cellular DNA at the site of integration. The 5'-ends are produced by integrase-catalyzed staggered cuts, 5 bp apart. A Y-shaped, gapped, recombination intermediate results, with the 5'-ends of the viral DNA strands and the 3' ends of target DNA strands remaining unjoined, flanking a gap of 5 bp. The last step is viral DNA integration into host chromosome. This involves host DNA repair synthesis in which the 5 bp gaps between the unjoined strands are filled in and then ligated. Since this process occurs at both cuts flanking the HIV genome, a 5 bp duplication of host DNA is produced at the ends of HIV-1 integration. Alternatively, Integrase may catalyze the excision of viral DNA just after strand transfer, this is termed disintegration. The protein is Gag-Pol polyprotein (gag-pol) of Homo sapiens (Human).